The following is a 366-amino-acid chain: Putative agmatine deiminase (366 aa).

The active-site Amidino-cysteine intermediate is Cys357.

It belongs to the agmatine deiminase family.

The enzyme catalyses agmatine + H2O = N-carbamoylputrescine + NH4(+). In Lactococcus lactis subsp. lactis (strain IL1403) (Streptococcus lactis), this protein is Putative agmatine deiminase.